We begin with the raw amino-acid sequence, 468 residues long: Glycosyl hydrolase family 109 protein (468 aa).

A signal peptide spans 1 to 19 (MVYKVFLSLCIGLALSASA). Residues 67-68 (MR), Asp-89, 138-141 (WKTH), 158-159 (EV), and Asn-187 each bind NAD(+). Residues Tyr-216, Arg-232, 244–247 (YATH), and Tyr-322 contribute to the substrate site. Tyr-244 serves as a coordination point for NAD(+).

Belongs to the Gfo/Idh/MocA family. Glycosyl hydrolase 109 subfamily. Requires NAD(+) as cofactor.

Functionally, glycosidase. The protein is Glycosyl hydrolase family 109 protein of Porphyromonas gingivalis (strain ATCC BAA-308 / W83).